A 357-amino-acid chain; its full sequence is tRNA-specific 2-thiouridylase MnmA (357 aa).

ATP contacts are provided by residues 6 to 13 (AMSGGVDS) and Leu32. Cys101 serves as the catalytic Nucleophile. Cys101 and Cys193 are oxidised to a cystine. Residue Gly125 participates in ATP binding. The tract at residues 143–145 (KDQ) is interaction with tRNA. Catalysis depends on Cys193, which acts as the Cysteine persulfide intermediate.

It belongs to the MnmA/TRMU family.

Its subcellular location is the cytoplasm. The catalysed reaction is S-sulfanyl-L-cysteinyl-[protein] + uridine(34) in tRNA + AH2 + ATP = 2-thiouridine(34) in tRNA + L-cysteinyl-[protein] + A + AMP + diphosphate + H(+). Functionally, catalyzes the 2-thiolation of uridine at the wobble position (U34) of tRNA, leading to the formation of s(2)U34. The sequence is that of tRNA-specific 2-thiouridylase MnmA from Mycolicibacterium vanbaalenii (strain DSM 7251 / JCM 13017 / BCRC 16820 / KCTC 9966 / NRRL B-24157 / PYR-1) (Mycobacterium vanbaalenii).